The sequence spans 197 residues: Wadjet protein JetB (197 aa).

Component of antiplasmid transformation system Wadjet type I, composed of JetA, JetB, JetC and JetD. Expression of Wadjet type I in B.subtilis (strain BEST7003) reduces the transformation efficiency of plasmid pHCMC05. This chain is Wadjet protein JetB, found in Bacillus cereus (strain Q1).